A 652-amino-acid polypeptide reads, in one-letter code: Na(+)/H(+) antiporter NhaA 3 (652 aa).

The interval 1–428 is na(+)/H(+) antiporter NhaA; the sequence is MTGEIPRGRR…GASLTTWLVF (428 aa). The next 11 helical transmembrane spans lie at 32 to 52, 78 to 98, 114 to 134, 142 to 162, 173 to 193, 200 to 220, 227 to 249, 306 to 326, 342 to 362, 376 to 396, and 411 to 431; these read ETGS…WVNL, LRFW…GLEV, MLPL…YLAF, VGWG…LAVL, FLLT…AIAY, MALF…AAGV, LLLG…VVGL, HPWA…GVVV, GVLF…SMLV, WAAI…ALLI, and VGIL…FRLA. Residues 429 to 623 enclose the Thioredoxin domain; the sequence is RLAARLAPAR…LSAAVMSAFA (195 aa). A disordered region spans residues 626–652; the sequence is RLRPEGGREPDHRSEAGSEQPDEEPGT. Residues 627 to 641 show a composition bias toward basic and acidic residues; the sequence is LRPEGGREPDHRSEA.

The protein in the N-terminal section; belongs to the NhaA Na(+)/H(+) (TC 2.A.33) antiporter family.

It is found in the cell membrane. It catalyses the reaction Na(+)(in) + 2 H(+)(out) = Na(+)(out) + 2 H(+)(in). Its function is as follows. Na(+)/H(+) antiporter that extrudes sodium in exchange for external protons. This Salinispora tropica (strain ATCC BAA-916 / DSM 44818 / JCM 13857 / NBRC 105044 / CNB-440) protein is Na(+)/H(+) antiporter NhaA 3.